The primary structure comprises 164 residues: OV-17 antigen (164 aa).

Positions 1–16 (MKFVILLTIGLLVVAA) are cleaved as a signal peptide. The disordered stretch occupies residues 24–43 (QQQQQQQQQRDEREIPPFLE).

This sequence belongs to the SXP/RAL-2 family. High levels in the hypodermal layer of the adult female.

The polypeptide is OV-17 antigen (OV17) (Onchocerca volvulus).